Reading from the N-terminus, the 616-residue chain is Leucine aminopeptidase (616 aa).

Residues Gln128 to Gln130 and Gly282 to Asn286 contribute to the substrate site. His309 lines the Zn(2+) pocket. Glu310 serves as the catalytic Proton acceptor. His313 and Glu332 together coordinate Zn(2+). Tyr397 functions as the Proton donor in the catalytic mechanism. Arg566 to Lys568 contacts substrate.

This sequence belongs to the peptidase M1 family. Requires Zn(2+) as cofactor.

Its subcellular location is the cytoplasm. The enzyme catalyses an epoxide + H2O = an ethanediol. In terms of biological role, aminopeptidase that preferentially cleaves di- and tripeptides. Also has low epoxide hydrolase activity (in vitro). Can hydrolyze the epoxide leukotriene LTA(4) but it forms preferentially 5,6-dihydroxy-7,9,11,14-eicosatetraenoic acid rather than the cytokine leukotriene B(4) as the product compared to the homologous mammalian enzyme (in vitro). This chain is Leucine aminopeptidase (LKHA4), found in Arabidopsis thaliana (Mouse-ear cress).